Consider the following 320-residue polypeptide: Glyoxylate/hydroxypyruvate reductase B (320 aa).

Active-site residues include arginine 233 and glutamate 262. Histidine 281 functions as the Proton donor in the catalytic mechanism.

Belongs to the D-isomer specific 2-hydroxyacid dehydrogenase family. GhrB subfamily. In terms of assembly, homodimer.

It is found in the cytoplasm. It catalyses the reaction glycolate + NADP(+) = glyoxylate + NADPH + H(+). It carries out the reaction (R)-glycerate + NAD(+) = 3-hydroxypyruvate + NADH + H(+). The enzyme catalyses (R)-glycerate + NADP(+) = 3-hydroxypyruvate + NADPH + H(+). In terms of biological role, catalyzes the NADPH-dependent reduction of glyoxylate and hydroxypyruvate into glycolate and glycerate, respectively. The polypeptide is Glyoxylate/hydroxypyruvate reductase B (Pectobacterium carotovorum subsp. carotovorum (strain PC1)).